The chain runs to 394 residues: Putative transporter AraJ (394 aa).

Over 1 to 4 the chain is Cytoplasmic; sequence MKKV. The helical transmembrane segment at 5–27 threads the bilayer; it reads ILSLALGTFGLGMAEFGIMGVLT. Over 28-41 the chain is Periplasmic; that stretch reads ELAHNVGISIPAAG. A helical membrane pass occupies residues 42-63; that stretch reads HMISYYALGVVVGAPIIALFSS. The Cytoplasmic segment spans residues 64-69; that stretch reads RYSLKH. Residues 70–89 form a helical membrane-spanning segment; the sequence is ILLFLVALCVIGNAMFTLSS. Topologically, residues 90-93 are periplasmic; sequence SYLM. Residues 94–116 form a helical membrane-spanning segment; the sequence is LAIGRLVSGFPHGAFFGVGAIVL. Topologically, residues 117–128 are cytoplasmic; the sequence is SKIIKPGKVTAA. The chain crosses the membrane as a helical span at residues 129–151; sequence VAGMVSGMTVANLLGIPLGTYLS. The Periplasmic segment spans residues 152 to 155; it reads QEFS. Residues 156–178 traverse the membrane as a helical segment; that stretch reads WRYTFLLIAVFNIAVMASVYFWV. Residues 179–198 are Cytoplasmic-facing; it reads PDIRDEAKGNLREQFHFLRS. The chain crosses the membrane as a helical span at residues 199-221; the sequence is PAPWLIFAATMFGNAGVFAWFSY. The Periplasmic portion of the chain corresponds to 222 to 235; it reads VKPYMMFISGFSET. A helical transmembrane segment spans residues 236–255; that stretch reads AMTFIMMLVGLGMVLGNMLS. Topologically, residues 256 to 261 are cytoplasmic; it reads GRISGR. A helical membrane pass occupies residues 262–284; the sequence is YSPLRIAAVTDFIIVLALLMLFF. Over 285 to 293 the chain is Periplasmic; the sequence is CGGMKTTSL. The helical transmembrane segment at 294–316 threads the bilayer; it reads IFAFICCAGLFALSAPLQILLLQ. Residues 317 to 322 lie on the Cytoplasmic side of the membrane; sequence NAKGGE. The helical transmembrane segment at 323 to 342 threads the bilayer; sequence LLGAAGGQIAFNLGSAVGAY. The Periplasmic portion of the chain corresponds to 343–351; sequence CGGMMLTLG. A helical membrane pass occupies residues 352–374; it reads LAYNYVALPAALLSFAAMSSLLL. At 375-394 the chain is on the cytoplasmic side; it reads YGRYKRQQAADTPVLAKPLG.

It belongs to the major facilitator superfamily.

The protein resides in the cell inner membrane. In terms of biological role, may be involved in either the transport or processing of arabinose polymers. This chain is Putative transporter AraJ (araJ), found in Escherichia coli (strain K12).